Reading from the N-terminus, the 270-residue chain is Putative carboxymethylenebutenolidase (270 aa).

Active-site residues include Cys-147, Asp-204, and His-236.

This sequence belongs to the dienelactone hydrolase family.

The enzyme catalyses 2-(5-oxo-2,5-dihydrofuran-2-ylidene)acetate + H2O = 4-oxohex-2-enedioate + H(+). This Salmonella typhimurium (strain LT2 / SGSC1412 / ATCC 700720) protein is Putative carboxymethylenebutenolidase (ysgA).